Here is a 589-residue protein sequence, read N- to C-terminus: Probable translation initiation factor IF-2 (589 aa).

Residues 4 to 225 enclose the tr-type G domain; it reads VRSPFVVVMG…AGVSQRFIPR (222 aa). Residues 13 to 20 are G1; sequence GHVDVGKT. Residue 13 to 20 participates in GTP binding; sequence GHVDVGKT. The G2 stretch occupies residues 38–42; sequence MITQH. Residues 79 to 82 form a G3 region; sequence DTPG. Residues 79–83 and 133–136 each bind GTP; these read DTPGH and NKLD. Residues 133 to 136 are G4; sequence NKLD. The segment at 201-203 is G5; sequence SAV.

The protein belongs to the TRAFAC class translation factor GTPase superfamily. Classic translation factor GTPase family. IF-2 subfamily.

Its function is as follows. Function in general translation initiation by promoting the binding of the formylmethionine-tRNA to ribosomes. Seems to function along with eIF-2. This is Probable translation initiation factor IF-2 from Pyrobaculum aerophilum (strain ATCC 51768 / DSM 7523 / JCM 9630 / CIP 104966 / NBRC 100827 / IM2).